We begin with the raw amino-acid sequence, 291 residues long: ATP synthase gamma chain (291 aa).

It belongs to the ATPase gamma chain family. F-type ATPases have 2 components, CF(1) - the catalytic core - and CF(0) - the membrane proton channel. CF(1) has five subunits: alpha(3), beta(3), gamma(1), delta(1), epsilon(1). CF(0) has three main subunits: a, b and c.

It is found in the cell membrane. Its function is as follows. Produces ATP from ADP in the presence of a proton gradient across the membrane. The gamma chain is believed to be important in regulating ATPase activity and the flow of protons through the CF(0) complex. This chain is ATP synthase gamma chain, found in Streptococcus equi subsp. zooepidemicus (strain MGCS10565).